We begin with the raw amino-acid sequence, 107 residues long: Thiosulfate sulfurtransferase GlpE (107 aa).

Residues Lys19–Lys107 form the Rhodanese domain. Cys67 acts as the Cysteine persulfide intermediate in catalysis.

It belongs to the GlpE family.

It is found in the cytoplasm. It catalyses the reaction thiosulfate + hydrogen cyanide = thiocyanate + sulfite + 2 H(+). The catalysed reaction is thiosulfate + [thioredoxin]-dithiol = [thioredoxin]-disulfide + hydrogen sulfide + sulfite + 2 H(+). Transferase that catalyzes the transfer of sulfur from thiosulfate to thiophilic acceptors such as cyanide or dithiols. May function in a CysM-independent thiosulfate assimilation pathway by catalyzing the conversion of thiosulfate to sulfite, which can then be used for L-cysteine biosynthesis. This chain is Thiosulfate sulfurtransferase GlpE, found in Aliivibrio salmonicida (strain LFI1238) (Vibrio salmonicida (strain LFI1238)).